Reading from the N-terminus, the 145-residue chain is CASP-like protein SELMODRAFT_406854 (145 aa).

Topologically, residues Met1–Pro31 are cytoplasmic. A helical membrane pass occupies residues Thr32–Val52. At Thr53 to Leu75 the chain is on the extracellular side. Residues Ile76 to Phe96 form a helical membrane-spanning segment. At Leu97 to Ala112 the chain is on the cytoplasmic side. A helical transmembrane segment spans residues Leu113–Ile133. Residues Arg134–Val145 are Extracellular-facing.

It belongs to the Casparian strip membrane proteins (CASP) family. In terms of assembly, homodimer and heterodimers.

It is found in the cell membrane. This Selaginella moellendorffii (Spikemoss) protein is CASP-like protein SELMODRAFT_406854.